Consider the following 200-residue polypeptide: H-2 class I histocompatibility antigen, Q9 alpha chain (200 aa).

The N-terminal stretch at 1 to 21 (MALTMLLLLVAAALTLIETRA) is a signal peptide. Residues 22–111 (GQHSLQYFHT…AQSYYNQSKG (90 aa)) form an alpha-1 region. At 22 to 200 (GQHSLQYFHT…RYLELGKETL (179 aa)) the chain is on the extracellular side. An N-linked (GlcNAc...) asparagine glycan is attached at Asn107. The alpha-2 stretch occupies residues 112 to 200 (GSHTLQWMYG…RYLELGKETL (89 aa)). The cysteines at positions 122 and 185 are disulfide-linked.

This sequence belongs to the MHC class I family. Heterodimer of an alpha chain and a beta chain (beta-2-microglobulin).

The protein localises to the membrane. Functionally, involved in the presentation of foreign antigens to the immune system. The chain is H-2 class I histocompatibility antigen, Q9 alpha chain (H2-Q9) from Mus musculus (Mouse).